A 383-amino-acid polypeptide reads, in one-letter code: Succinyl-diaminopimelate desuccinylase (383 aa).

His73 provides a ligand contact to Zn(2+). Asp75 is a catalytic residue. Position 107 (Asp107) interacts with Zn(2+). Glu141 functions as the Proton acceptor in the catalytic mechanism. 3 residues coordinate Zn(2+): Glu142, Glu170, and His356.

Belongs to the peptidase M20A family. DapE subfamily. In terms of assembly, homodimer. The cofactor is Zn(2+). Co(2+) is required as a cofactor.

It catalyses the reaction N-succinyl-(2S,6S)-2,6-diaminopimelate + H2O = (2S,6S)-2,6-diaminopimelate + succinate. It functions in the pathway amino-acid biosynthesis; L-lysine biosynthesis via DAP pathway; LL-2,6-diaminopimelate from (S)-tetrahydrodipicolinate (succinylase route): step 3/3. In terms of biological role, catalyzes the hydrolysis of N-succinyl-L,L-diaminopimelic acid (SDAP), forming succinate and LL-2,6-diaminopimelate (DAP), an intermediate involved in the bacterial biosynthesis of lysine and meso-diaminopimelic acid, an essential component of bacterial cell walls. This chain is Succinyl-diaminopimelate desuccinylase, found in Pseudomonas syringae pv. syringae (strain B728a).